Consider the following 311-residue polypeptide: tRNA dimethylallyltransferase (311 aa).

Residue 9–16 (GPTAVGKT) participates in ATP binding. 11–16 (TAVGKT) provides a ligand contact to substrate. The segment at 34–37 (DSMQ) is interaction with substrate tRNA.

It belongs to the IPP transferase family. Monomer. Mg(2+) is required as a cofactor.

The catalysed reaction is adenosine(37) in tRNA + dimethylallyl diphosphate = N(6)-dimethylallyladenosine(37) in tRNA + diphosphate. Catalyzes the transfer of a dimethylallyl group onto the adenine at position 37 in tRNAs that read codons beginning with uridine, leading to the formation of N6-(dimethylallyl)adenosine (i(6)A). In Clostridium botulinum (strain Okra / Type B1), this protein is tRNA dimethylallyltransferase.